A 98-amino-acid polypeptide reads, in one-letter code: NADH-ubiquinone oxidoreductase chain 4L (98 aa).

3 helical membrane-spanning segments follow: residues 2-22 (TQAS…TLIF), 29-49 (TLLC…MTAL), and 61-81 (IVML…LAMI).

This sequence belongs to the complex I subunit 4L family. In terms of assembly, core subunit of respiratory chain NADH dehydrogenase (Complex I) which is composed of 45 different subunits.

It is found in the mitochondrion inner membrane. It catalyses the reaction a ubiquinone + NADH + 5 H(+)(in) = a ubiquinol + NAD(+) + 4 H(+)(out). Core subunit of the mitochondrial membrane respiratory chain NADH dehydrogenase (Complex I) which catalyzes electron transfer from NADH through the respiratory chain, using ubiquinone as an electron acceptor. Part of the enzyme membrane arm which is embedded in the lipid bilayer and involved in proton translocation. This Calomys musculinus (Drylands vesper mouse) protein is NADH-ubiquinone oxidoreductase chain 4L (MT-ND4L).